The chain runs to 133 residues: Small ribosomal subunit protein uS9 (133 aa).

Residues 114-133 (VERKKYGKKKARRSPQFSKR) form a disordered region. The segment covering 118 to 133 (KYGKKKARRSPQFSKR) has biased composition (basic residues).

This sequence belongs to the universal ribosomal protein uS9 family.

The polypeptide is Small ribosomal subunit protein uS9 (Fusobacterium nucleatum subsp. nucleatum (strain ATCC 25586 / DSM 15643 / BCRC 10681 / CIP 101130 / JCM 8532 / KCTC 2640 / LMG 13131 / VPI 4355)).